The following is a 276-amino-acid chain: Digeranylgeranylglyceryl phosphate synthase (276 aa).

Transmembrane regions (helical) follow at residues 12-34 (PHNC…GSVP), 38-60 (ILIL…NDYF), 84-104 (ALWY…LISL), 107-127 (FAFA…LKPL), 146-166 (GAIA…AFLV), 202-222 (VAAF…KAGV), 224-244 (VGYY…YLIL), and 256-276 (QLLL…AALM).

Belongs to the UbiA prenyltransferase family. DGGGP synthase subfamily. Mg(2+) is required as a cofactor.

The protein resides in the cell membrane. The catalysed reaction is sn-3-O-(geranylgeranyl)glycerol 1-phosphate + (2E,6E,10E)-geranylgeranyl diphosphate = 2,3-bis-O-(geranylgeranyl)-sn-glycerol 1-phosphate + diphosphate. It participates in membrane lipid metabolism; glycerophospholipid metabolism. Its function is as follows. Prenyltransferase that catalyzes the transfer of the geranylgeranyl moiety of geranylgeranyl diphosphate (GGPP) to the C2 hydroxyl of (S)-3-O-geranylgeranylglyceryl phosphate (GGGP). This reaction is the second ether-bond-formation step in the biosynthesis of archaeal membrane lipids. The polypeptide is Digeranylgeranylglyceryl phosphate synthase (Thermococcus gammatolerans (strain DSM 15229 / JCM 11827 / EJ3)).